We begin with the raw amino-acid sequence, 553 residues long: uncharacterized protein (553 aa).

The next 2 helical transmembrane spans lie at I6–A26 and S524–F544.

The protein to M.jannaschii MJ0795 and MJ1506.

It localises to the cell membrane. This is an uncharacterized protein from Methanocaldococcus jannaschii (strain ATCC 43067 / DSM 2661 / JAL-1 / JCM 10045 / NBRC 100440) (Methanococcus jannaschii).